Reading from the N-terminus, the 1280-residue chain is Multidrug resistance protein 1 (1280 aa).

Residues 1 to 72 lie on the Cytoplasmic side of the membrane; that stretch reads MSRAHAAYAN…YADATDRVLM (72 aa). The region spanning 72-357 is the ABC transmembrane type-1 1 domain; it reads MIAGTAFAVA…VAPSRTAFTE (286 aa). The next 6 membrane-spanning stretches (helical) occupy residues 73 to 93, 120 to 140, 189 to 209, 216 to 236, 297 to 317, and 326 to 345; these read IAGTAFAVACGAGMPVFSFIF, YVGIAMLIACAGHVMCWTVAA, KLSQGIMNGSMGVIGYIAGFV, LMMIGMMPFIIVMAAIIGSIV, LSAAVIMALMYVSYTVAFFFG, and RDMADIISTFLAVLMGSFGL. Topologically, residues 346 to 712 are cytoplasmic; the sequence is GFVAPSRTAF…MRMNKDKAWA (367 aa). Residues 391–634 form the ABC transporter 1 domain; the sequence is IEFRNVRFAY…DGEFAAVAKM (244 aa). 426–433 is an ATP binding site; it reads GASGCGKS. The next 6 helical transmembrane spans lie at 713–733, 762–781, 837–857, 858–878, 938–958, and 976–996; these read VALGILSSVVIGSARPASSIV, PLFIVFAVANFSGWILHGFY, IGLKVQTMCIIASGLVVGFIY, QWKLALVALACMPLMIGCSLT, IIAGGIYGITQFIFYGVYALC, and VMIASMSILFGAQNAGEAGAF. In terms of domain architecture, ABC transmembrane type-1 2 spans 713 to 1002; that stretch reads VALGILSSVV…AGAFATKLAD (290 aa). The 239-residue stretch at 1036 to 1274 folds into the ABC transporter 2 domain; sequence IEYRNVQFIY…GGEYKTRYDL (239 aa). 1071 to 1078 lines the ATP pocket; it reads GQTGCGKS. Asn1113 carries an N-linked (GlcNAc...) asparagine glycan.

Belongs to the ABC transporter superfamily. ABCB family. Multidrug resistance exporter (TC 3.A.1.201) subfamily.

It is found in the membrane. The catalysed reaction is ATP + H2O + xenobioticSide 1 = ADP + phosphate + xenobioticSide 2.. Its function is as follows. Energy-dependent efflux pump responsible for decreased drug accumulation in multi-drug-resistant cells. Confers vinblastine resistance. This Leishmania enriettii protein is Multidrug resistance protein 1 (MDR1).